We begin with the raw amino-acid sequence, 340 residues long: GTPase Obg (340 aa).

The Obg domain occupies 1-159; sequence MGFIDEVKLC…KHVLLKLKVL (159 aa). The region spanning 160 to 329 is the OBG-type G domain; sequence SDVGIIGMPN…LSEKLKKSNS (170 aa). Residues 166–173, 191–195, 212–215, 279–282, and 310–312 contribute to the GTP site; these read GMPNAGKS, FTTVR, DIPG, NKCD, and NGD. Serine 173 and threonine 193 together coordinate Mg(2+).

It belongs to the TRAFAC class OBG-HflX-like GTPase superfamily. OBG GTPase family. In terms of assembly, monomer. The cofactor is Mg(2+).

The protein localises to the cytoplasm. Functionally, an essential GTPase which binds GTP, GDP and possibly (p)ppGpp with moderate affinity, with high nucleotide exchange rates and a fairly low GTP hydrolysis rate. Plays a role in control of the cell cycle, stress response, ribosome biogenesis and in those bacteria that undergo differentiation, in morphogenesis control. The protein is GTPase Obg of Wolbachia pipientis wMel.